The primary structure comprises 231 residues: MKLPAPLIEGRLVRRYKRFLADVELADGSLVTAHTPNTGSMLQCAVPGHRVLISRSDNPKRKLAYTLELIEVAGFWVDTHTHRTNRVAEEALRGGAVLEFTGWQVTPEHTYGDSRIDFLLQQNDRQALVEVKNVTLLCDGQCACFPDAVTTRGQKHLRTLMDARRAGMRAAILFVVQRGEATAFRPADTIDPEYGRLLRQAVSEGVEALAYRTRISPTQTFIDRRLPVWLD.

Belongs to the SfsA family.

The protein is Sugar fermentation stimulation protein homolog of Syntrophotalea carbinolica (strain DSM 2380 / NBRC 103641 / GraBd1) (Pelobacter carbinolicus).